A 655-amino-acid polypeptide reads, in one-letter code: MKTLLLLLIIITMPVLAQDSIVFGVHSKTAPLEWRNNGVDQGFNIELMDRIGQLTNKRIIVRRKSFQQLVKDVHDPDSDIDVIAVVSPVNMDRKLAQSDPIYATHAKAYTLQGKALINNWADLVGKRVAIKNGAFVDVFLSDHLQNFDRVDVDLYETGFQLLIKNQVDVVIAESFVARRLLPLYPSVRSSSDALIYGAFNFVANETKTELMYQINEALRQLKLSGEYDKLVNKWFGTGREKVDLTSSEKRMFALAILVAIMSAIGMIFTGFISASLRRHTKALDAELIQRKRIEVEISELSQQFQSVLDGLPNGVTIVNQELQHLWSNDNNIHLLDSDEFYYVDNNVFKLKAAVLEVLSTQKSFTADMRYQQQFWQLQIHPIANNQVVILLEESTEQHRLRQANEEASRLASLGELSAGIAHEINNPTGLIVHAVSLFTAAMKDLTPAAKHYQKQNPFWLIAGLNPDIAIEELQYSCGSIEEGAKRISRIVNDLKRYAMPHIADQYTLVSLNDVVQVAQRLTANQTKSHQISTMLCDPSPCITGDAQQLHQVLINLIQNACNACSTQPGIIVIDTHVANNMAILSIKDNGCGMDSATLKRITEPFFTTRRNEGGSGLGLSVCSKIIKEHQGEMQIQSTLGKGTQIRLIFALAQQD.

A signal peptide spans 1-17; it reads MKTLLLLLIIITMPVLA. Residues 252–272 form a helical membrane-spanning segment; the sequence is FALAILVAIMSAIGMIFTGFI. A Histidine kinase domain is found at 419-653; that stretch reads GIAHEINNPT…QIRLIFALAQ (235 aa). A Phosphohistidine; by autocatalysis modification is found at His422.

It localises to the cell membrane. It carries out the reaction ATP + protein L-histidine = ADP + protein N-phospho-L-histidine.. The polypeptide is Putative sensor protein Sfri_3689 (Shewanella frigidimarina (strain NCIMB 400)).